A 348-amino-acid chain; its full sequence is Dihydroorotase (348 aa).

Zn(2+) contacts are provided by H17 and H19. Substrate-binding positions include 19–21 and N45; that span reads HLR. Positions 103, 140, and 178 each coordinate Zn(2+). K103 is subject to N6-carboxylysine. H140 is a binding site for substrate. Substrate is bound at residue L223. D251 contacts Zn(2+). D251 is an active-site residue. H255 and A267 together coordinate substrate.

The protein belongs to the metallo-dependent hydrolases superfamily. DHOase family. Class II DHOase subfamily. As to quaternary structure, homodimer. Requires Zn(2+) as cofactor.

It catalyses the reaction (S)-dihydroorotate + H2O = N-carbamoyl-L-aspartate + H(+). It participates in pyrimidine metabolism; UMP biosynthesis via de novo pathway; (S)-dihydroorotate from bicarbonate: step 3/3. Functionally, catalyzes the reversible cyclization of carbamoyl aspartate to dihydroorotate. The sequence is that of Dihydroorotase from Escherichia coli O6:K15:H31 (strain 536 / UPEC).